The chain runs to 287 residues: Festuclavine synthase I (287 aa).

The protein belongs to the fgaFS/easG family.

It carries out the reaction festuclavine + NAD(+) = 6,8-dimethyl-6,7-didehydroergoline + NADH + H(+). It functions in the pathway alkaloid biosynthesis; ergot alkaloid biosynthesis. In terms of biological role, festuclavine synthase; part of the gene cluster that mediates the biosynthesis of isofumigaclavines, fungal ergot alkaloids. The tryptophan dimethylallyltransferase ifgA catalyzes the first step of ergot alkaloid biosynthesis by condensing dimethylallyl diphosphate (DMAP) and tryptophan to form 4-dimethylallyl-L-tryptophan. The second step is catalyzed by the methyltransferase ifgB that methylates 4-dimethylallyl-L-tryptophan in the presence of S-adenosyl-L-methionine, resulting in the formation of N-methyl-dimethylallyl-L-tryptophan. The catalase ifgD and the FAD-dependent oxidoreductase ifgC then transform N-methyl-dimethylallyl-L-tryptophan to chanoclavine-I which is further oxidized by ifgE in the presence of NAD(+), resulting in the formation of chanoclavine-I aldehyde. The chanoclavine-I aldehyde reductases ifgG and/or fgaOx3 reduce chanoclavine-I aldehyde to dihydrochanoclavine-I aldehyde that spontaneously dehydrates to form 6,8-dimethyl-6,7-didehydroergoline. The festuclavine dehydrogenases ifgF1 and/or ifgF2 then catalyze the reduction of 6,8-dimethyl-6,7-didehydroergoline to form festuclavine. Hydrolysis of festuclavine by a yet undetermined cytochrome P450 monooxygenase (called ifgH) then leads to the formation of isofumigaclavine B which is in turn acetylated by ifgI to isofumigaclavine A. Penicillium roqueforti has interestingly at least two sets of genes for the consumption of chanoclavine-I aldehyde on three different loci, the OYEs ifgG/fgaOx3 and the festuclavine synthase homologs ifgF1/ifgF2. The reason for the duplication of these genes is unclear, probably to ensure the conversion of chanoclavine-I aldehyde by differential gene expression under various environmental conditions. The chain is Festuclavine synthase I from Penicillium roqueforti (strain FM164).